Reading from the N-terminus, the 312-residue chain is Olfactory receptor 8H3 (312 aa).

The Extracellular segment spans residues 1-26; it reads MMGRRNDTNVADFILTGLSDSEEVQM. Residue Asn6 is glycosylated (N-linked (GlcNAc...) asparagine). A helical membrane pass occupies residues 27–47; that stretch reads ALFMLFLLIYLITMLGNVGML. The Cytoplasmic portion of the chain corresponds to 48–55; the sequence is LIIRLDLQ. A helical membrane pass occupies residues 56-76; sequence LHTPMYFFLTHLSFIDLSYST. The Extracellular portion of the chain corresponds to 77–99; the sequence is VVTPKTLANLLTSNYISFTGCFA. A disulfide bridge connects residues Cys97 and Cys189. A helical transmembrane segment spans residues 100–120; the sequence is QMFCFVFLGTAECYLLSSMAY. Residues 121–139 lie on the Cytoplasmic side of the membrane; sequence DRYAAICSPLHYTVIMPKR. Residues 140–160 form a helical membrane-spanning segment; it reads LCLALITGPYVIGFMDSFVNV. The Extracellular portion of the chain corresponds to 161 to 197; that stretch reads VSMSRLHFCDSNIIHHFFCDTSPILALSCTDTDNTEM. A helical membrane pass occupies residues 198–217; that stretch reads LIFIIAGSTLMVSLITISAS. Residues 218–237 are Cytoplasmic-facing; sequence YVSILSTILKINSTSGKQKA. A helical membrane pass occupies residues 238–258; sequence FSTCVSHLLGVTIFYGTMIFT. Over 259–271 the chain is Extracellular; that stretch reads YLKPRKSYSLGRD. Residues 272–292 form a helical membrane-spanning segment; the sequence is QVAPVFYTIVIPMLNPLIYSL. Residues 293 to 312 lie on the Cytoplasmic side of the membrane; sequence RNREVKNALIRVMQRRQDSR.

The protein belongs to the G-protein coupled receptor 1 family.

It is found in the cell membrane. In terms of biological role, odorant receptor. The polypeptide is Olfactory receptor 8H3 (OR8H3) (Homo sapiens (Human)).